The primary structure comprises 1022 residues: MARVGRVGFLTLAVVFHLMYAYSIFDIYFVSPIVSGMRSFGVEREASAEAPAKRLVLFVADGLRADKAFQALPDPDAPSDLENDEPIYLAPFIRSRALSHGTFGISHTRVPTESRPGHVALIAGLYEDVSAVTTGWKLNPVDFDSVFNRSRHTWSWGSPDILPMFKEGAVPGRIDADTYGEEAEDFSADATKLDIWVFDKVKELFASAKKDPELDAKLREDKLVFFLHLLGLDTTGHAYRPYSKEYLRNIKLVDKGVQEITQLVEDFYGDGKTSFVFTADHGMSDWGSHGDGHPDNTRTPLVVWGSGVASPRYTHEGTITGHEDGVSADWGLDSVQRNDVAQADVAALMAYLVGLDFPTNSVGQLPLGYLDTSPKDKALAALANAQGVLEMYRVKEEQKRDALLRYTPFEPLADNGETSVEARLERIKTLISNKSYDASIQLSSELLLTALEGLRYLQTYDWLFLRTIVSLGYLGWIAYALTTVIDLHVLHGKSESNRTTFSIMFFSSILVALFSVLLYQGSSWRYYLYALFPIFFWEEVFARRKALLAGREILLGHVHSVSGYFAFAIQLLLYVGVLEALVQSYFHRDIFTVCFILGGFWPITYGTKFLGQHKLLSASWALGCFLMSIFTLLPANKVEDMMMISCGSLLMFLTGLLYLIFERSILGQKRSSDPNSVVSSCGSRTIMGAQVGMILLALIVTRSSVASLQAKQGLPLGNQVLGWAILVSSLLLPFLHRLYPNSHYLHRLMVIFLTFSPIFIILTISYEGLFYFVFCMTLLAWVRLEQAIYIHTTAPTREQDHSVANGSLPAKKPSPGNTVVVEGQPYRYRTLSVSDARVALFFFFLLQSGFFSTGNIASVSSFSLDSVYRLIPIFNPFAQGALLILKLLIPFAIISANLGILNHRLEVAPSALFMVVMSISDVMTLNFFYMVRDEGSWLEIGTTISHFCIASFLCTFVAVLEFLSELFISGVDFGHPATTVGSAVAKAVNGSVACGHSPDSDISGEDSTSVGITAKADPDARS.

Over 1 to 6 the chain is Cytoplasmic; it reads MARVGR. A helical membrane pass occupies residues 7-27; it reads VGFLTLAVVFHLMYAYSIFDI. Topologically, residues 28-466 are lumenal; the sequence is YFVSPIVSGM…LQTYDWLFLR (439 aa). Asparagine 148 and asparagine 433 each carry an N-linked (GlcNAc...) asparagine glycan. A helical transmembrane segment spans residues 467 to 487; that stretch reads TIVSLGYLGWIAYALTTVIDL. At 488 to 498 the chain is on the cytoplasmic side; it reads HVLHGKSESNR. Residues 499-519 traverse the membrane as a helical segment; that stretch reads TTFSIMFFSSILVALFSVLLY. The Lumenal segment spans residues 520–560; it reads QGSSWRYYLYALFPIFFWEEVFARRKALLAGREILLGHVHS. A helical membrane pass occupies residues 561 to 581; it reads VSGYFAFAIQLLLYVGVLEAL. The Cytoplasmic segment spans residues 582–589; sequence VQSYFHRD. A helical transmembrane segment spans residues 590–610; the sequence is IFTVCFILGGFWPITYGTKFL. Over 611–614 the chain is Lumenal; sequence GQHK. A helical membrane pass occupies residues 615–635; the sequence is LLSASWALGCFLMSIFTLLPA. Residues 636 to 640 lie on the Cytoplasmic side of the membrane; that stretch reads NKVED. Residues 641 to 661 traverse the membrane as a helical segment; it reads MMMISCGSLLMFLTGLLYLIF. Topologically, residues 662–685 are lumenal; it reads ERSILGQKRSSDPNSVVSSCGSRT. A helical transmembrane segment spans residues 686–706; sequence IMGAQVGMILLALIVTRSSVA. The Cytoplasmic segment spans residues 707 to 713; the sequence is SLQAKQG. Residues 714 to 734 form a helical membrane-spanning segment; that stretch reads LPLGNQVLGWAILVSSLLLPF. Over 735 to 749 the chain is Lumenal; that stretch reads LHRLYPNSHYLHRLM. The next 2 helical transmembrane spans lie at 750–770 and 771–791; these read VIFLTFSPIFIILTISYEGLF and YFVFCMTLLAWVRLEQAIYIH. Over 792 to 837 the chain is Lumenal; it reads TTAPTREQDHSVANGSLPAKKPSPGNTVVVEGQPYRYRTLSVSDAR. Asparagine 805 carries N-linked (GlcNAc...) asparagine glycosylation. Residues 838–858 form a helical membrane-spanning segment; the sequence is VALFFFFLLQSGFFSTGNIAS. The Cytoplasmic segment spans residues 859-880; it reads VSSFSLDSVYRLIPIFNPFAQG. The helical transmembrane segment at 881–901 threads the bilayer; the sequence is ALLILKLLIPFAIISANLGIL. The Lumenal segment spans residues 902-910; sequence NHRLEVAPS. The helical transmembrane segment at 911-931 threads the bilayer; the sequence is ALFMVVMSISDVMTLNFFYMV. At 932–947 the chain is on the cytoplasmic side; sequence RDEGSWLEIGTTISHF. The chain crosses the membrane as a helical span at residues 948-968; that stretch reads CIASFLCTFVAVLEFLSELFI. The Lumenal segment spans residues 969–1022; the sequence is SGVDFGHPATTVGSAVAKAVNGSVACGHSPDSDISGEDSTSVGITAKADPDARS. Asparagine 989 is a glycosylation site (N-linked (GlcNAc...) asparagine). The tract at residues 998–1022 is disordered; the sequence is PDSDISGEDSTSVGITAKADPDARS.

This sequence belongs to the PIGG/PIGN/PIGO family. PIGN subfamily.

The protein resides in the endoplasmic reticulum membrane. The protein operates within glycolipid biosynthesis; glycosylphosphatidylinositol-anchor biosynthesis. Ethanolamine phosphate transferase involved in glycosylphosphatidylinositol-anchor biosynthesis. Transfers ethanolamine phosphate to the first alpha-1,4-linked mannose of the glycosylphosphatidylinositol precursor of GPI-anchor. The protein is GPI ethanolamine phosphate transferase 1 (mcd4) of Aspergillus oryzae (strain ATCC 42149 / RIB 40) (Yellow koji mold).